We begin with the raw amino-acid sequence, 376 residues long: Erythronate-4-phosphate dehydrogenase (376 aa).

2 residues coordinate substrate: serine 45 and threonine 67. NAD(+) is bound by residues aspartate 147, 209–211 (ASR), and aspartate 235. The active site involves arginine 211. Residue glutamate 240 is part of the active site. Histidine 257 serves as the catalytic Proton donor. Glycine 260 is an NAD(+) binding site. Tyrosine 261 is a substrate binding site.

The protein belongs to the D-isomer specific 2-hydroxyacid dehydrogenase family. PdxB subfamily. In terms of assembly, homodimer.

Its subcellular location is the cytoplasm. It catalyses the reaction 4-phospho-D-erythronate + NAD(+) = (R)-3-hydroxy-2-oxo-4-phosphooxybutanoate + NADH + H(+). Its pathway is cofactor biosynthesis; pyridoxine 5'-phosphate biosynthesis; pyridoxine 5'-phosphate from D-erythrose 4-phosphate: step 2/5. In terms of biological role, catalyzes the oxidation of erythronate-4-phosphate to 3-hydroxy-2-oxo-4-phosphonooxybutanoate. The polypeptide is Erythronate-4-phosphate dehydrogenase (Aeromonas hydrophila subsp. hydrophila (strain ATCC 7966 / DSM 30187 / BCRC 13018 / CCUG 14551 / JCM 1027 / KCTC 2358 / NCIMB 9240 / NCTC 8049)).